The following is a 333-amino-acid chain: NADH dehydrogenase (ubiquinone) complex I, assembly factor 6 (333 aa).

A mitochondrion-targeting transit peptide spans 1–44 (MAASAHGSVWGPLRLGIPGLCCRRPPLGLYARMRRLPGPEVSGR).

The protein belongs to the NDUFAF6 family. In terms of tissue distribution, widely expressed. A lower expression is observed in lung and kidney compared to heart, muscle and liver. In the kidney, expression is high in the basal zone of the proximal tubular cells.

It is found in the mitochondrion inner membrane. Its subcellular location is the cytoplasm. The protein resides in the nucleus. Functionally, involved in the assembly of mitochondrial NADH:ubiquinone oxidoreductase complex (complex I) at early stages. May play a role in the biogenesis of complex I subunit MT-ND1. The sequence is that of NADH dehydrogenase (ubiquinone) complex I, assembly factor 6 (NDUFAF6) from Homo sapiens (Human).